The sequence spans 350 residues: Probable galactose-1-phosphate uridylyltransferase (350 aa).

A disordered region spans residues 31–52 (PWSGQQEKAQKNELPEFDPTNP). Residue cysteine 54 coordinates Zn(2+). UDP-alpha-D-glucose-binding positions include 76-77 (ND) and asparagine 152. Histidine 163 provides a ligand contact to Zn(2+). Histidine 165 functions as the Tele-UMP-histidine intermediate in the catalytic mechanism. UDP-alpha-D-glucose contacts are provided by residues glutamine 167, 314–317 (KFMV), and 319–320 (FE).

It belongs to the galactose-1-phosphate uridylyltransferase type 1 family. As to quaternary structure, homodimer. The cofactor is Zn(2+).

The catalysed reaction is alpha-D-galactose 1-phosphate + UDP-alpha-D-glucose = alpha-D-glucose 1-phosphate + UDP-alpha-D-galactose. Its pathway is carbohydrate metabolism; galactose metabolism. This chain is Probable galactose-1-phosphate uridylyltransferase (Galt), found in Drosophila melanogaster (Fruit fly).